We begin with the raw amino-acid sequence, 590 residues long: Beta-fructofuranosidase, cell wall isozyme (590 aa).

The N-terminal stretch at 1-28 (MGTRPRGVVLAPWAVVLVLVLALRLAGA) is a signal peptide. Asp-68 is a catalytic residue. 2 N-linked (GlcNAc...) asparagine glycosylation sites follow: Asn-190 and Asn-341.

Belongs to the glycosyl hydrolase 32 family.

It localises to the secreted. It is found in the cell wall. The catalysed reaction is Hydrolysis of terminal non-reducing beta-D-fructofuranoside residues in beta-D-fructofuranosides.. The sequence is that of Beta-fructofuranosidase, cell wall isozyme from Zea mays (Maize).